Reading from the N-terminus, the 713-residue chain is Denticleless protein homolog (713 aa).

3 WD repeats span residues 47-89 (GAAV…VQRL), 96-135 (AHTNAVFDIAWVPGEHKLVTASGDQTAKLWDVKAGDLIGE), and 138-178 (GHQC…KDGF). The DDB1-binding motif motif lies at 168–171 (WDTR). Positions 197-204 (PSKVKKRK) match the Nuclear localization signal motif. 4 WD repeats span residues 215–254 (DSQQSVTVVIFQDEHTIISAGAVDGIVKVWDLRKNYSAYR), 270–309 (TRKLGYSNLVLDPTGTNLFASCTDDNVYMFNATGLKTEPV), 314–355 (GHQN…VPPV), and 359–399 (GHCQ…EDSA). The DDB1-binding motif signature appears at 244–247 (WDLR). 3 disordered regions span residues 474 to 544 (TPQR…EKRA), 604 to 623 (GFDQEFSPGPSTSFLINGTV), and 635 to 700 (SDLR…TPGS). Polar residues-rich tracts occupy residues 504-516 (TPKSSTRADTKTP) and 612-623 (GPSTSFLINGTV). Basic and acidic residues predominate over residues 635–644 (SDLRDKENSS). Polar residues predominate over residues 686 to 699 (NAPNSPVSVPTTPG).

It belongs to the WD repeat cdt2 family. Component of the DCX(DTL) E3 ubiquitin ligase complex, at least composed of cul4 (cul4a or cul4b), ddb1, dtl/cdt2 and rbx1.

It localises to the nucleus. Its subcellular location is the cytoplasm. It is found in the cytoskeleton. The protein resides in the microtubule organizing center. The protein localises to the centrosome. It localises to the chromosome. It functions in the pathway protein modification; protein ubiquitination. Its function is as follows. Substrate-specific adapter of a DCX (DDB1-CUL4-X-box) E3 ubiquitin-protein ligase complex required for cell cycle control, DNA damage response and translesion DNA synthesis. The DCX(DTL) complex, also named CRL4(CDT2) complex, mediates the polyubiquitination and subsequent degradation of CDT1, CDKN1A/p21(CIP1), KMT5A and SDE2. CDT1 degradation in response to DNA damage is necessary to ensure proper cell cycle regulation of DNA replication. CDKN1A/p21(CIP1) degradation during S phase or following UV irradiation is essential to control replication licensing. KMT5A degradation is also important for a proper regulation of mechanisms such as TGF-beta signaling, cell cycle progression, DNA repair and cell migration. Most substrates require their interaction with PCNA for their polyubiquitination: substrates interact with PCNA via their PIP-box, and those containing the 'K+4' motif in the PIP box, recruit the DCX(DTL) complex, leading to their degradation. In undamaged proliferating cells, the DCX(DTL) complex also promotes the 'Lys-164' monoubiquitination of PCNA, thereby being involved in PCNA-dependent translesion DNA synthesis. May play a role in the regulation of the circadian clock. This chain is Denticleless protein homolog (dtl), found in Xenopus tropicalis (Western clawed frog).